Reading from the N-terminus, the 272-residue chain is MIGRVYQVISGFYDIKCEDKFYRVRAIGNLRNLKLNPVVGDLVVFDESLTKIEPRKNILIRPKVANIDQAIIVISLDQPKFSSFLLDKFLSIIEFQKIKVVIIFTKADLNTKEDIGYYLKTYQSYLTSLDDENSYKKLNDIFEKKISVLVGQSGVGKTTILNKVSLNNFFTQNISKALGRGKHSTRVVKMIDFNNGQIIDTPGFSSIEIQMSQKDLSKSFESFDKYSQRCKYRHCLHQNERLEDCNIKQLVQSQEIPLFRYNNYLKLLDEVK.

Residues 56 to 207 (KNILIRPKVA…IIDTPGFSSI (152 aa)) form the CP-type G domain. GTP-binding positions include 105 to 108 (TKAD) and 151 to 159 (GQSGVGKTT). Residues C230, C235, H237, and C245 each coordinate Zn(2+).

The protein belongs to the TRAFAC class YlqF/YawG GTPase family. RsgA subfamily. In terms of assembly, monomer. Associates with 30S ribosomal subunit, binds 16S rRNA. Zn(2+) serves as cofactor.

It is found in the cytoplasm. In terms of biological role, one of several proteins that assist in the late maturation steps of the functional core of the 30S ribosomal subunit. Helps release RbfA from mature subunits. May play a role in the assembly of ribosomal proteins into the subunit. Circularly permuted GTPase that catalyzes slow GTP hydrolysis, GTPase activity is stimulated by the 30S ribosomal subunit. This is Small ribosomal subunit biogenesis GTPase RsgA from Mycoplasmopsis pulmonis (strain UAB CTIP) (Mycoplasma pulmonis).